A 560-amino-acid polypeptide reads, in one-letter code: Arginine--tRNA ligase (560 aa).

Residues 121–131 (PNIAKPFSMGH) carry the 'HIGH' region motif.

This sequence belongs to the class-I aminoacyl-tRNA synthetase family. In terms of assembly, monomer.

It is found in the cytoplasm. It catalyses the reaction tRNA(Arg) + L-arginine + ATP = L-arginyl-tRNA(Arg) + AMP + diphosphate. The chain is Arginine--tRNA ligase from Exiguobacterium sibiricum (strain DSM 17290 / CCUG 55495 / CIP 109462 / JCM 13490 / 255-15).